A 311-amino-acid polypeptide reads, in one-letter code: Mitochondrial arginine transporter BAC1 (311 aa).

Solcar repeat units follow at residues phenylalanine 12 to phenylalanine 101, proline 111 to histidine 203, and valine 219 to methionine 305. The next 6 membrane-spanning stretches (helical) occupy residues tyrosine 18–valine 38, glycine 76–serine 96, proline 113–proline 133, glycine 178–tyrosine 197, glycine 222–phenylalanine 242, and alanine 288–isoleucine 308.

Belongs to the mitochondrial carrier (TC 2.A.29) family. In terms of tissue distribution, high expression in flowers and siliques. Lower expression in leaves and stems.

It localises to the mitochondrion inner membrane. Its activity is regulated as follows. Inhibited by mercuric chloride. Functionally, mitochondrial arginine transporter that catalyzes the counter-exchange of arginine with lysine, ornithine, arginine and histidine. Substrate preference in reconstituted proteoliposomes is arginine &gt; lysine &gt; ornithine &gt; histidine. May be involved in the delivery of arginine, released from seed reserves, to mitochondrial arginase and the export of ornithine. In Arabidopsis thaliana (Mouse-ear cress), this protein is Mitochondrial arginine transporter BAC1 (BAC1).